Reading from the N-terminus, the 133-residue chain is Small ribosomal subunit protein uS8 (133 aa).

The protein belongs to the universal ribosomal protein uS8 family. In terms of assembly, part of the 30S ribosomal subunit. Contacts proteins S5 and S12.

One of the primary rRNA binding proteins, it binds directly to 16S rRNA central domain where it helps coordinate assembly of the platform of the 30S subunit. This chain is Small ribosomal subunit protein uS8, found in Prochlorococcus marinus (strain MIT 9303).